The chain runs to 378 residues: Leukocyte elastase inhibitor (378 aa).

Position 1 is an N-acetylmethionine (methionine 1). An N6-acetyllysine modification is found at lysine 137. Serine 299 is modified (phosphoserine). The CARD-binding motif (CBM) stretch occupies residues 350 to 378 (DFIADHPFIFFIRHNPSSNILFLGRLSSP).

The protein belongs to the serpin family. Ov-serpin subfamily. In terms of assembly, monomer. Interacts (via C-terminus) with CASP1; CASP4 (via CARD domain) and CASP5; these interactions regulate the activity of inflammatory caspases. Interacts with PRTN3. Interacts with GZMH.

The protein localises to the secreted. The protein resides in the cytoplasm. It is found in the cytolytic granule. Its subcellular location is the early endosome. Neutrophil serine protease inhibitor that plays an essential role in the regulation of the innate immune response, inflammation and cellular homeostasis. Acts primarily to protect the cell from proteases released in the cytoplasm during stress or infection. These proteases are important in killing microbes but when released from granules, these potent enzymes also destroy host proteins and contribute to mortality. Regulates the activity of the neutrophil proteases elastase, cathepsin G, proteinase-3, chymase, chymotrypsin, and kallikrein-3. Also acts as a potent intracellular inhibitor of GZMH by directly blocking its proteolytic activity. During inflammation, limits the activity of inflammatory caspases CASP1, CASP4 and CASP5 by suppressing their caspase-recruitment domain (CARD) oligomerization and enzymatic activation. When secreted, promotes the proliferation of beta-cells via its protease inhibitory function. Its function is as follows. May be cleaved leading to a loss of its anti-protease activity and to the appearance of an endonuclease activity. However no catalytic site was identified. The sequence is that of Leukocyte elastase inhibitor (SERPINB1) from Sus scrofa (Pig).